The primary structure comprises 155 residues: Large ribosomal subunit protein eL24B (155 aa).

Residue Ser7 is modified to Phosphoserine. Residues 66–155 form a disordered region; sequence EVAKKRSRKT…AFQKVAATSR (90 aa). Residues 89-129 show a composition bias toward basic and acidic residues; it reads LIKERRSLKPEVRKANREEKLKANKEKKRAEKAARKAEKAK.

It belongs to the eukaryotic ribosomal protein eL24 family. In terms of assembly, component of the large ribosomal subunit (LSU). Mature yeast ribosomes consist of a small (40S) and a large (60S) subunit. The 40S small subunit contains 1 molecule of ribosomal RNA (18S rRNA) and 33 different proteins (encoded by 57 genes). The large 60S subunit contains 3 rRNA molecules (25S, 5.8S and 5S rRNA) and 46 different proteins (encoded by 81 genes).

It localises to the cytoplasm. In terms of biological role, component of the ribosome, a large ribonucleoprotein complex responsible for the synthesis of proteins in the cell. The small ribosomal subunit (SSU) binds messenger RNAs (mRNAs) and translates the encoded message by selecting cognate aminoacyl-transfer RNA (tRNA) molecules. The large subunit (LSU) contains the ribosomal catalytic site termed the peptidyl transferase center (PTC), which catalyzes the formation of peptide bonds, thereby polymerizing the amino acids delivered by tRNAs into a polypeptide chain. The nascent polypeptides leave the ribosome through a tunnel in the LSU and interact with protein factors that function in enzymatic processing, targeting, and the membrane insertion of nascent chains at the exit of the ribosomal tunnel. This Saccharomyces cerevisiae (strain ATCC 204508 / S288c) (Baker's yeast) protein is Large ribosomal subunit protein eL24B.